The primary structure comprises 275 residues: Exosome complex component Rrp42 (275 aa).

Belongs to the RNase PH family. Rrp42 subfamily. As to quaternary structure, component of the archaeal exosome complex. Forms a hexameric ring-like arrangement composed of 3 Rrp41-Rrp42 heterodimers. The hexameric ring associates with a trimer of Rrp4 and/or Csl4 subunits.

It is found in the cytoplasm. Functionally, non-catalytic component of the exosome, which is a complex involved in RNA degradation. Contributes to the structuring of the Rrp41 active site. This is Exosome complex component Rrp42 from Sulfurisphaera tokodaii (strain DSM 16993 / JCM 10545 / NBRC 100140 / 7) (Sulfolobus tokodaii).